The sequence spans 105 residues: Pyrimidine/purine nucleoside phosphorylase (105 aa).

The protein belongs to the nucleoside phosphorylase PpnP family.

It carries out the reaction a purine D-ribonucleoside + phosphate = a purine nucleobase + alpha-D-ribose 1-phosphate. The catalysed reaction is adenosine + phosphate = alpha-D-ribose 1-phosphate + adenine. The enzyme catalyses cytidine + phosphate = cytosine + alpha-D-ribose 1-phosphate. It catalyses the reaction guanosine + phosphate = alpha-D-ribose 1-phosphate + guanine. It carries out the reaction inosine + phosphate = alpha-D-ribose 1-phosphate + hypoxanthine. The catalysed reaction is thymidine + phosphate = 2-deoxy-alpha-D-ribose 1-phosphate + thymine. The enzyme catalyses uridine + phosphate = alpha-D-ribose 1-phosphate + uracil. It catalyses the reaction xanthosine + phosphate = alpha-D-ribose 1-phosphate + xanthine. In terms of biological role, catalyzes the phosphorolysis of diverse nucleosides, yielding D-ribose 1-phosphate and the respective free bases. Can use uridine, adenosine, guanosine, cytidine, thymidine, inosine and xanthosine as substrates. Also catalyzes the reverse reactions. This is Pyrimidine/purine nucleoside phosphorylase from Cupriavidus pinatubonensis (strain JMP 134 / LMG 1197) (Cupriavidus necator (strain JMP 134)).